A 365-amino-acid polypeptide reads, in one-letter code: Myb/SANT-like DNA-binding domain-containing protein 3 (365 aa).

A Myb-like domain is found at 13–78 (FSELEKSVLL…QLKKCWENIK (66 aa)). Residues 301-337 (QLIQMNEVHVAKVQQIERECEMAEEEHRIKMEILNKK) are a coiled coil.

The protein belongs to the MSANTD3 family.

This chain is Myb/SANT-like DNA-binding domain-containing protein 3 (msantd3), found in Xenopus laevis (African clawed frog).